The sequence spans 330 residues: GRB2-related adapter protein 2 (330 aa).

One can recognise an SH3 1 domain in the interval 1 to 56 (MEAVAKFDFTASGEDELSFHTGDVLKILSNQEEWFKAELGSQEGYVPKNFIDIQFP). At Tyr-45 the chain carries Phosphotyrosine. Residues 58–149 (WFHEGLSRHQ…QKQIFLRDRT (92 aa)) enclose the SH2 domain. Lys-106 bears the N6-acetyllysine mark. A disordered region spans residues 143-244 (IFLRDRTRED…GSLDINDGHC (102 aa)). Residues 144-164 (FLRDRTREDQGHRGNSLDRRS) are compositionally biased toward basic and acidic residues. Position 187 is a phosphoserine (Ser-187). Positions 209–222 (PAPQQLQQPPQQRY) are enriched in low complexity. At Ser-236 the chain carries Phosphoserine. Position 262 is a phosphothreonine (Thr-262). The 60-residue stretch at 271-330 (GRVRWARALYDFEALEDDELGFHSGEVVEVLDSSNPSWWTGRLHNKLGLFPANYVAPMTR) folds into the SH3 2 domain.

Belongs to the GRB2/sem-5/DRK family. As to quaternary structure, interacts with phosphorylated LIME1 upon TCR activation. Interacts with phosphorylated LAT and LAX1 upon TCR activation. Interacts with SHB. Interacts with PTPN23.

It localises to the nucleus. It is found in the cytoplasm. The protein resides in the endosome. Functionally, interacts with SLP-76 to regulate NF-AT activation. Binds to tyrosine-phosphorylated shc. The chain is GRB2-related adapter protein 2 (GRAP2) from Homo sapiens (Human).